Consider the following 308-residue polypeptide: Ribonuclease Z (308 aa).

Histidine 61, histidine 63, aspartate 65, histidine 66, histidine 139, aspartate 210, and histidine 268 together coordinate Zn(2+). The active-site Proton acceptor is the aspartate 65.

The protein belongs to the RNase Z family. Homodimer. Requires Zn(2+) as cofactor.

It carries out the reaction Endonucleolytic cleavage of RNA, removing extra 3' nucleotides from tRNA precursor, generating 3' termini of tRNAs. A 3'-hydroxy group is left at the tRNA terminus and a 5'-phosphoryl group is left at the trailer molecule.. Zinc phosphodiesterase, which displays some tRNA 3'-processing endonuclease activity. Probably involved in tRNA maturation, by removing a 3'-trailer from precursor tRNA. This chain is Ribonuclease Z, found in Halobacterium salinarum (strain ATCC 700922 / JCM 11081 / NRC-1) (Halobacterium halobium).